The chain runs to 473 residues: Pyruvate kinase (473 aa).

R32 is a binding site for substrate. K(+) is bound by residues N34, S36, D66, and T67. 34 to 37 is a binding site for ATP; sequence NFSH. Positions 73 and 155 each coordinate ATP. A Mg(2+)-binding site is contributed by E221. The substrate site is built by G244, D245, and T277. D245 provides a ligand contact to Mg(2+).

The protein belongs to the pyruvate kinase family. In terms of assembly, homotetramer. Mg(2+) is required as a cofactor. K(+) serves as cofactor.

It carries out the reaction pyruvate + ATP = phosphoenolpyruvate + ADP + H(+). It participates in carbohydrate degradation; glycolysis; pyruvate from D-glyceraldehyde 3-phosphate: step 5/5. The chain is Pyruvate kinase (pyk) from Clostridium acetobutylicum (strain ATCC 824 / DSM 792 / JCM 1419 / IAM 19013 / LMG 5710 / NBRC 13948 / NRRL B-527 / VKM B-1787 / 2291 / W).